The sequence spans 476 residues: Protein transport protein Sec61 subunit alpha (476 aa).

The Cytoplasmic segment spans residues 2-33 (GIKFLEVIKPFCAVLPEIQKPERKIQFREKVL). A helical membrane pass occupies residues 34 to 53 (WTAITLFIFLVCCQIPLFGI). Topologically, residues 54–76 (MSSDSADPFYWMRVILASNRGTL) are lumenal. The helical transmembrane segment at 77–96 (MELGISPIVTSGLIMQLLAG) threads the bilayer. The Cytoplasmic segment spans residues 97–117 (AKIIGVGDTPKDRALFNGAQK). Residues 118 to 138 (LFGMIITIGQAIVYVMTGMYG) traverse the membrane as a helical segment. Residues 139 to 144 (DPSEMG) are Lumenal-facing. A helical transmembrane segment spans residues 145–165 (AGICLLIIIQLFVAGLIVLLL). Topologically, residues 166–172 (DELLQKG) are cytoplasmic. A helical transmembrane segment spans residues 173–193 (YGLGSGISLFIATNICETIVW). The Lumenal portion of the chain corresponds to 194 to 240 (KAFSPTTVNTGRGTEFEGAIIALFHLLATRTDKVRALREGFYRQNLP). A helical membrane pass occupies residues 241–261 (NLMNLIATVFVFAVVIYFQGF). Over 262 to 288 (RVDLPIKSARYRGQYNTYPIKLFYTSN) the chain is Cytoplasmic. Residues 289 to 309 (IPIILQSALVSNLYVISQMLS) form a helical membrane-spanning segment. At 310 to 354 (TRFSGNFLVNLLGTWSDATSGGPARAYPVAGLCYYLSPPESFGSV) the chain is on the lumenal side. Residues 355-375 (LDDPVHAGIYIVFMLGSCAFF) form a helical membrane-spanning segment. The Cytoplasmic portion of the chain corresponds to 376–420 (SKTWIEVSGSSAKDVAKQLKEQQMVMRGHRETSMVHELNRYIPTA). Residues 421–441 (AAFGGLCIGGLSVMADFLGAI) traverse the membrane as a helical segment. At 442–445 (GSGT) the chain is on the lumenal side. The chain crosses the membrane as a helical span at residues 446–462 (GILLAVTIIYQYFEIFV). At 463-476 (KEQSEVGSMGALLF) the chain is on the cytoplasmic side.

The protein belongs to the SecY/SEC61-alpha family. The SEC61 channel-forming translocon complex consists of channel-forming core components SEC61A1, SEC61B and SEC61G and different auxiliary components such as SEC62 and SEC63. The SEC61 channel associates with the multi-pass translocon (MPT) complex.

It localises to the endoplasmic reticulum membrane. Component of SEC61 channel-forming translocon complex that mediates transport of signal peptide-containing precursor polypeptides across the endoplasmic reticulum (ER). Forms a ribosome receptor and a gated pore in the ER membrane, both functions required for cotranslational translocation of nascent polypeptides. May cooperate with auxiliary protein SEC62, SEC63 and HSPA5/BiP to enable post-translational transport of small presecretory proteins. The SEC61 channel is also involved in ER membrane insertion of transmembrane proteins: it mediates membrane insertion of the first few transmembrane segments of proteins, while insertion of subsequent transmembrane regions of multi-pass membrane proteins is mediated by the multi-pass translocon (MPT) complex. This chain is Protein transport protein Sec61 subunit alpha (sec61a), found in Hemitripterus americanus (Sea raven).